A 169-amino-acid chain; its full sequence is 6,7-dimethyl-8-ribityllumazine synthase (169 aa).

5-amino-6-(D-ribitylamino)uracil is bound by residues phenylalanine 24, 58–60, and 82–84; these read ALE and AVV. Residue 87–88 participates in (2S)-2-hydroxy-3-oxobutyl phosphate binding; the sequence is ET. The active-site Proton donor is histidine 90. Asparagine 115 is a binding site for 5-amino-6-(D-ribitylamino)uracil. Arginine 129 is a (2S)-2-hydroxy-3-oxobutyl phosphate binding site.

The protein belongs to the DMRL synthase family.

The catalysed reaction is (2S)-2-hydroxy-3-oxobutyl phosphate + 5-amino-6-(D-ribitylamino)uracil = 6,7-dimethyl-8-(1-D-ribityl)lumazine + phosphate + 2 H2O + H(+). It functions in the pathway cofactor biosynthesis; riboflavin biosynthesis; riboflavin from 2-hydroxy-3-oxobutyl phosphate and 5-amino-6-(D-ribitylamino)uracil: step 1/2. Functionally, catalyzes the formation of 6,7-dimethyl-8-ribityllumazine by condensation of 5-amino-6-(D-ribitylamino)uracil with 3,4-dihydroxy-2-butanone 4-phosphate. This is the penultimate step in the biosynthesis of riboflavin. The polypeptide is 6,7-dimethyl-8-ribityllumazine synthase (Cupriavidus metallidurans (strain ATCC 43123 / DSM 2839 / NBRC 102507 / CH34) (Ralstonia metallidurans)).